We begin with the raw amino-acid sequence, 472 residues long: UDP-N-acetylmuramate--L-alanine ligase (472 aa).

Position 119 to 125 (119 to 125) interacts with ATP; the sequence is GTHGKTT.

This sequence belongs to the MurCDEF family.

The protein resides in the cytoplasm. It catalyses the reaction UDP-N-acetyl-alpha-D-muramate + L-alanine + ATP = UDP-N-acetyl-alpha-D-muramoyl-L-alanine + ADP + phosphate + H(+). Its pathway is cell wall biogenesis; peptidoglycan biosynthesis. Cell wall formation. The protein is UDP-N-acetylmuramate--L-alanine ligase of Caulobacter sp. (strain K31).